Consider the following 458-residue polypeptide: UDP-N-acetylmuramoylalanine--D-glutamate ligase (458 aa).

124-130 (GSDGKTT) is an ATP binding site.

The protein belongs to the MurCDEF family.

Its subcellular location is the cytoplasm. It carries out the reaction UDP-N-acetyl-alpha-D-muramoyl-L-alanine + D-glutamate + ATP = UDP-N-acetyl-alpha-D-muramoyl-L-alanyl-D-glutamate + ADP + phosphate + H(+). Its pathway is cell wall biogenesis; peptidoglycan biosynthesis. In terms of biological role, cell wall formation. Catalyzes the addition of glutamate to the nucleotide precursor UDP-N-acetylmuramoyl-L-alanine (UMA). The polypeptide is UDP-N-acetylmuramoylalanine--D-glutamate ligase (Clostridium botulinum (strain ATCC 19397 / Type A)).